A 371-amino-acid polypeptide reads, in one-letter code: Geranylgeranyl transferase type-2 subunit alpha (371 aa).

PFTA repeat units lie at residues 45–79, 92–126, 131–165, 177–211, and 242–276; these read YSDE…NNYS, ILNQ…ELVK, NWKY…NMEL, INLD…KIYN, and LLKN…DDLF.

The protein belongs to the protein prenyltransferase subunit alpha family. In terms of assembly, heterodimer of an alpha and a beta subunit.

The enzyme catalyses geranylgeranyl diphosphate + L-cysteinyl-[protein] = S-geranylgeranyl-L-cysteinyl-[protein] + diphosphate. Functionally, catalyzes the transfer of a geranyl-geranyl moiety from geranyl-geranyl pyrophosphate to proteins having the C-terminal -XCC or -XCXC, where both cysteines may become modified. Acts on YPT1 and SEC4. The protein is Geranylgeranyl transferase type-2 subunit alpha (BET4) of Candida albicans (Yeast).